The chain runs to 408 residues: Acetate kinase (408 aa).

Asparagine 7 lines the Mg(2+) pocket. Residue lysine 14 participates in ATP binding. Arginine 91 lines the substrate pocket. The Proton donor/acceptor role is filled by aspartate 148. Residues 208 to 212, 283 to 285, and 331 to 335 each bind ATP; these read HLGNG, DFR, and GIGEN. Glutamate 384 provides a ligand contact to Mg(2+).

The protein belongs to the acetokinase family. Homodimer. It depends on Mg(2+) as a cofactor. Requires Mn(2+) as cofactor.

Its subcellular location is the cytoplasm. The enzyme catalyses acetate + ATP = acetyl phosphate + ADP. Its pathway is metabolic intermediate biosynthesis; acetyl-CoA biosynthesis; acetyl-CoA from acetate: step 1/2. Inhibited by diethylpyrocarbonate, hydroxylamine and phenylglyoxal. Its function is as follows. Catalyzes the formation of acetyl phosphate from acetate and ATP. Can also catalyze the reverse reaction. Can also phosphorylate propionate, but has very low activity toward butyrate. This is Acetate kinase from Methanosarcina thermophila.